Consider the following 382-residue polypeptide: MRKRKGSADHDSSFTATLTDGSSDLKQCHKGTDADTDPGGSGKEMGRRCRRGGLMWRLRRILIWLLGIYIAIPVIIKVCPSIQAKLVFLNFVRVPYFIDLKRPQDQGMNHTHNFYLQPEEGINIGVWHTVPAGMWREAQAKDAEWYEKSFQSSHPVILYLHGNAGTRGGDHRVQLYKVLSSLGYHVVTFDYRGWGDSEGSPSERGMTSDALFLYQWIKQRIGPKPLYIWGHSLGTGVATNLVRRLCDRGTPPDALILESPFTNIREEAKSHPFSMVYRYLPGFDWFFLDAISANDIRFASDENVNHISCPVLILHAEDDTVVPFQLGKKLYDLAAQSKSLNGHKVQFIPFSSSLGYRHKFIYKSPQLPNILSDFLRAPHPHG.

Residues 1–12 (MRKRKGSADHDS) are compositionally biased toward basic and acidic residues. The tract at residues 1-45 (MRKRKGSADHDSSFTATLTDGSSDLKQCHKGTDADTDPGGSGKEM) is disordered. The Cytoplasmic portion of the chain corresponds to 1–60 (MRKRKGSADHDSSFTATLTDGSSDLKQCHKGTDADTDPGGSGKEMGRRCRRGGLMWRLRR). Residues 13–25 (SFTATLTDGSSDL) are compositionally biased toward polar residues. The chain crosses the membrane as a helical span at residues 61–81 (ILIWLLGIYIAIPVIIKVCPS). At 82–382 (IQAKLVFLNF…DFLRAPHPHG (301 aa)) the chain is on the extracellular side. The N-linked (GlcNAc...) asparagine glycan is linked to asparagine 109. Residue serine 232 is the Nucleophile of the active site. Catalysis depends on charge relay system residues aspartate 319 and histidine 358.

Belongs to the serine esterase family. In terms of tissue distribution, ubiquitously expressed in adult tissues.

It is found in the endoplasmic reticulum membrane. It catalyses the reaction 1-(9Z-octadecenoyl)-sn-glycero-3-phospho-L-serine + H2O = sn-glycero-3-phospho-L-serine + (9Z)-octadecenoate + H(+). It carries out the reaction 1-(9Z-octadecenoyl)-sn-glycero-3-phospho-(1'-sn-glycerol) + H2O = sn-glycero-3-phospho-(1'-sn-glycerol) + (9Z)-octadecenoate + H(+). The catalysed reaction is 1-(9Z-octadecenoyl)-sn-glycero-3-phospho-(1D-myo-inositol) + H2O = sn-glycero-3-phospho-1D-myo-inositol + (9Z)-octadecenoate + H(+). The enzyme catalyses 1-(9Z-octadecenoyl)-sn-glycero-3-phosphoethanolamine + H2O = sn-glycero-3-phosphoethanolamine + (9Z)-octadecenoate + H(+). It catalyses the reaction 1-(9Z-octadecenoyl)-sn-glycero-3-phosphocholine + H2O = 1-(9Z-octadecenoyl)-sn-glycerol + phosphocholine + H(+). It carries out the reaction 2-(9Z-octadecenoyl)-glycerol + H2O = glycerol + (9Z)-octadecenoate + H(+). The catalysed reaction is 1-hexadecanoyl-sn-glycero-3-phospho-L-serine + H2O = sn-glycero-3-phospho-L-serine + hexadecanoate + H(+). The enzyme catalyses 2-(5Z,8Z,11Z,14Z-eicosatetraenoyl)-glycerol + H2O = glycerol + (5Z,8Z,11Z,14Z)-eicosatetraenoate + H(+). It catalyses the reaction Hydrolyzes glycerol monoesters of long-chain fatty acids.. It carries out the reaction 1-decanoylglycerol + H2O = decanoate + glycerol + H(+). The catalysed reaction is 1-dodecanoylglycerol + H2O = dodecanoate + glycerol + H(+). The enzyme catalyses 1-tetradecanoylglycerol + H2O = tetradecanoate + glycerol + H(+). It catalyses the reaction 2-hexadecanoylglycerol + H2O = glycerol + hexadecanoate + H(+). It carries out the reaction 1-(9Z-octadecenoyl)-glycerol + H2O = glycerol + (9Z)-octadecenoate + H(+). The catalysed reaction is 2-(9Z,12Z-octadecadienoyl)-glycerol + H2O = (9Z,12Z)-octadecadienoate + glycerol + H(+). The enzyme catalyses 1-(5Z,8Z,11Z,14Z-eicosatetraenoyl)-glycerol + H2O = glycerol + (5Z,8Z,11Z,14Z)-eicosatetraenoate + H(+). It catalyses the reaction 1-(9Z,12Z-octadecadienoyl)-glycerol + H2O = (9Z,12Z)-octadecadienoate + glycerol + H(+). It carries out the reaction 1-hexadecanoylglycerol + H2O = glycerol + hexadecanoate + H(+). The catalysed reaction is 1-octadecanoylglycerol + H2O = octadecanoate + glycerol + H(+). The enzyme catalyses 1-octadecanoyl-2-(9,10-epoxyoctadecanoyl)-sn-glycero-3-phospho-L-serine + H2O = 9,10-epoxyoctadecanoate + 1-octadecanoyl-sn-glycero-3-phosphoserine + H(+). It catalyses the reaction 1-octadecanoyl-2-(10-hydroxyoctadecanoyl)-sn-glycero-3-phospho-L-serine + H2O = 1-octadecanoyl-sn-glycero-3-phosphoserine + 10-hydroxyoctadecanoate + H(+). It carries out the reaction 1-hexadecanoyl-2-(10-hydroxyoctadecanoyl)-sn-glycero-3-phospho-L-serine + H2O = 10-hydroxyoctadecanoate + 1-hexadecanoyl-sn-glycero-3-phospho-L-serine + H(+). Lysophosphatidylserine (LPS) lipase that mediates the hydrolysis of lysophosphatidylserine, a class of signaling lipids that regulates immunological and neurological processes. Represents a major lysophosphatidylserine lipase in the brain, thereby playing a key role in the central nervous system. Also able to hydrolyze oxidized phosphatidylserine; oxidized phosphatidylserine is produced in response to severe inflammatory stress and constitutes a proapoptotic 'eat me' signal. Also has monoacylglycerol (MAG) lipase activity: hydrolyzes 2-arachidonoylglycerol (2-AG), thereby acting as a regulator of endocannabinoid signaling pathways. Has a strong preference for very-long-chain lipid substrates; substrate specificity is likely due to improved catalysis and not improved substrate binding. This chain is Lysophosphatidylserine lipase ABHD12, found in Danio rerio (Zebrafish).